The chain runs to 144 residues: Peroxisomal membrane protein PEX34 (144 aa).

Transmembrane regions (helical) follow at residues 18–30 (NIWS…LDFF), 52–73 (VWLC…KLCK), and 109–131 (TAAL…RLFK).

In terms of assembly, homooligomer. Interacts with PEX11, PEX25 and PEX27.

The protein localises to the peroxisome membrane. In concert with the three peroxisome divisional factors, PEX11, PEX25 and PEX27, controls peroxisome morphology and abundance under conditions of peroxisome proliferation. Maintains mature peroxisomes in actively dividing cells. This chain is Peroxisomal membrane protein PEX34 (PEX34), found in Saccharomyces cerevisiae (strain ATCC 204508 / S288c) (Baker's yeast).